An 851-amino-acid chain; its full sequence is DNA mismatch repair protein MutS (851 aa).

ATP is bound at residue 602 to 609; the sequence is GPNMSGKS.

It belongs to the DNA mismatch repair MutS family.

In terms of biological role, this protein is involved in the repair of mismatches in DNA. It is possible that it carries out the mismatch recognition step. This protein has a weak ATPase activity. In Streptococcus pyogenes serotype M12 (strain MGAS2096), this protein is DNA mismatch repair protein MutS.